The following is a 490-amino-acid chain: Sushi domain-containing protein 4 (490 aa).

A disordered region spans residues 1–21; that stretch reads MYHGMNPSNGDGFLEQQQQQQ. An N-terminal signal peptide occupies residues 1–41; the sequence is MYHGMNPSNGDGFLEQQQQQQQPQSPQRLLAVILWFQLALC. At 42-319 the chain is on the extracellular side; sequence FGPAQLTGGF…PSTHETLLTT (278 aa). Sushi domains follow at residues 55–119, 120–179, 178–239, and 241–304; these read QVCA…ICVQ, EDCR…ICQG, QGCL…RCLA, and EVCP…YCIK. 8 disulfides stabilise this stretch: Cys57-Cys99, Cys85-Cys117, Cys122-Cys165, Cys147-Cys177, Cys180-Cys224, Cys210-Cys237, Cys243-Cys289, and Cys274-Cys302. Residues Asn104 and Asn134 are each glycosylated (N-linked (GlcNAc...) asparagine). An N-linked (GlcNAc...) asparagine glycan is attached at Asn192. The helical transmembrane segment at 320 to 340 threads the bilayer; the sequence is WKIVAFTATSVLLVLLLVILA. Residues 341 to 490 lie on the Cytoplasmic side of the membrane; the sequence is RMFQTKFKAH…DEIPLMEEDP (150 aa). The interval 401–490 is disordered; the sequence is GCPLPVDDQS…DEIPLMEEDP (90 aa). Over residues 430-456 the composition is skewed to polar residues; it reads CDSVSGSSELLQSLYSPPRCQESTHPA. The segment covering 479 to 490 has biased composition (acidic residues); it reads IADEIPLMEEDP.

In terms of tissue distribution, isoform 3 is the predominant isoform in all tissues except cortex, cerebellum, kidney, and breast. Isoform 1 is found primarily in the esophagus and the brain.

It is found in the membrane. The protein localises to the secreted. Its function is as follows. Acts as a complement inhibitor by disrupting the formation of the classical C3 convertase. Isoform 3 inhibits the classical complement pathway, while membrane-bound isoform 1 inhibits deposition of C3b via both the classical and alternative complement pathways. This chain is Sushi domain-containing protein 4 (SUSD4), found in Homo sapiens (Human).